We begin with the raw amino-acid sequence, 301 residues long: Recombination-associated protein RdgC (301 aa).

This sequence belongs to the RdgC family.

The protein localises to the cytoplasm. It is found in the nucleoid. Its function is as follows. May be involved in recombination. The protein is Recombination-associated protein RdgC of Xanthomonas oryzae pv. oryzae (strain KACC10331 / KXO85).